The primary structure comprises 256 residues: Thiazole synthase (256 aa).

Residue lysine 98 is the Schiff-base intermediate with DXP of the active site. Residues glycine 159, 185-186, and 207-208 contribute to the 1-deoxy-D-xylulose 5-phosphate site; these read AG and NT.

It belongs to the ThiG family. As to quaternary structure, homotetramer. Forms heterodimers with either ThiH or ThiS.

It is found in the cytoplasm. The enzyme catalyses [ThiS sulfur-carrier protein]-C-terminal-Gly-aminoethanethioate + 2-iminoacetate + 1-deoxy-D-xylulose 5-phosphate = [ThiS sulfur-carrier protein]-C-terminal Gly-Gly + 2-[(2R,5Z)-2-carboxy-4-methylthiazol-5(2H)-ylidene]ethyl phosphate + 2 H2O + H(+). It participates in cofactor biosynthesis; thiamine diphosphate biosynthesis. Catalyzes the rearrangement of 1-deoxy-D-xylulose 5-phosphate (DXP) to produce the thiazole phosphate moiety of thiamine. Sulfur is provided by the thiocarboxylate moiety of the carrier protein ThiS. In vitro, sulfur can be provided by H(2)S. This is Thiazole synthase from Aliivibrio fischeri (strain ATCC 700601 / ES114) (Vibrio fischeri).